The chain runs to 181 residues: Cytochrome b6-f complex iron-sulfur subunit (181 aa).

The segment at 1–35 (MAQTGNFKSPARMSSLGQGAAPASSGAVTGGKPRE) is disordered. Helical transmembrane passes span 53–73 (VGGV…KYII) and 114–134 (GGAL…VNWV). The region spanning 85-178 (LTVGKASEVP…ARIEGDSIII (94 aa)) is the Rieske domain. Cysteine 124, histidine 126, cysteine 142, and histidine 145 together coordinate [2Fe-2S] cluster. A disulfide bond links cysteine 129 and cysteine 144.

The protein belongs to the Rieske iron-sulfur protein family. [2Fe-2S] cluster is required as a cofactor.

The protein localises to the cell inner membrane. It carries out the reaction 2 oxidized [plastocyanin] + a plastoquinol + 2 H(+)(in) = 2 reduced [plastocyanin] + a plastoquinone + 4 H(+)(out). Component of the green S-bacteria bc-complex which consists of the Rieske protein and cytochrome b subunit and which appears to lack a cytochrome c1-equivalent. This complex has a comparatively low redox potential. The chain is Cytochrome b6-f complex iron-sulfur subunit (petC) from Chlorobaculum thiosulfatiphilum (Chlorobium limicola f.sp. thiosulfatophilum).